Consider the following 491-residue polypeptide: Cobyric acid synthase (491 aa).

Residues 253–429 form the GATase cobBQ-type domain; that stretch reads AHRVAVVRLP…WHGSLEGDAL (177 aa). Cys334 functions as the Nucleophile in the catalytic mechanism. His421 is an active-site residue.

The protein belongs to the CobB/CobQ family. CobQ subfamily.

Its pathway is cofactor biosynthesis; adenosylcobalamin biosynthesis. Catalyzes amidations at positions B, D, E, and G on adenosylcobyrinic A,C-diamide. NH(2) groups are provided by glutamine, and one molecule of ATP is hydrogenolyzed for each amidation. This is Cobyric acid synthase from Mycobacterium marinum (strain ATCC BAA-535 / M).